A 283-amino-acid polypeptide reads, in one-letter code: 2-heptyl-4(1H)-quinolone synthase subunit PqsB (283 aa).

The protein belongs to the thiolase-like superfamily. FabH family. In terms of assembly, forms a tight complex with PqsC.

It localises to the cytoplasm. Its activity is regulated as follows. Activity of the complex is inhibited by 2-aminoacetophenone (2-AA). In terms of biological role, required for the biosynthesis of the quorum-sensing signaling molecules 2-heptyl-4(1H)-quinolone (HHQ) and 2-heptyl-3-hydroxy-4(1H)-quinolone (Pseudomonas quinolone signal or PQS), which are important for biofilm formation and virulence. The PqsC/PqsB complex catalyzes the condensation of 2-aminobenzoylacetate (2-ABA) and octanoyl-CoA to form HHQ. PqsB, together with PqsC, catalyzes the coupling of 2-ABA with the octanoate group, leading to decarboxylation and dehydration, and resulting in closure of the quinoline ring. PqsB is probably required for the proper folding of PqsC rather than for a direct enzymatic role in the process. The chain is 2-heptyl-4(1H)-quinolone synthase subunit PqsB from Pseudomonas aeruginosa (strain ATCC 15692 / DSM 22644 / CIP 104116 / JCM 14847 / LMG 12228 / 1C / PRS 101 / PAO1).